We begin with the raw amino-acid sequence, 382 residues long: Succinate--CoA ligase [ADP-forming] subunit beta (382 aa).

An ATP-grasp domain is found at 9–237 (RDLLARYGIP…PSAEPEAERR (229 aa)). ATP-binding positions include Lys-45, 52–54 (GRG), Ile-94, and Glu-99. Asn-192 and Asp-206 together coordinate Mg(2+). Residues Asn-257 and 314–316 (GIT) each bind substrate.

It belongs to the succinate/malate CoA ligase beta subunit family. In terms of assembly, heterotetramer of two alpha and two beta subunits. Requires Mg(2+) as cofactor.

The catalysed reaction is succinate + ATP + CoA = succinyl-CoA + ADP + phosphate. It catalyses the reaction GTP + succinate + CoA = succinyl-CoA + GDP + phosphate. The protein operates within carbohydrate metabolism; tricarboxylic acid cycle; succinate from succinyl-CoA (ligase route): step 1/1. In terms of biological role, succinyl-CoA synthetase functions in the citric acid cycle (TCA), coupling the hydrolysis of succinyl-CoA to the synthesis of either ATP or GTP and thus represents the only step of substrate-level phosphorylation in the TCA. The beta subunit provides nucleotide specificity of the enzyme and binds the substrate succinate, while the binding sites for coenzyme A and phosphate are found in the alpha subunit. This Chloroflexus aggregans (strain MD-66 / DSM 9485) protein is Succinate--CoA ligase [ADP-forming] subunit beta.